A 66-amino-acid chain; its full sequence is Large ribosomal subunit protein bL35 (66 aa).

Belongs to the bacterial ribosomal protein bL35 family.

The protein is Large ribosomal subunit protein bL35 of Synechococcus sp. (strain RCC307).